We begin with the raw amino-acid sequence, 184 residues long: MSSNSAVQSKSPLLPKENPPVKAFPDNIQVSSSLLSFLIYILYTFSISGLSTFVITKYYIRPQWLYTLALRRALIKLYYNFMDGFNKRTDTLQHRVDDKKILKTIEKWSCIKEKLRRVANITEQEQQCIPAESSLDLSIQAMKGVVNAELYQFGSQISGSLEFDTPIGNLQKQIVSLKSKMINI.

The chain crosses the membrane as a helical span at residues 35–55; the sequence is LSFLIYILYTFSISGLSTFVI.

The protein resides in the membrane. This is an uncharacterized protein from Schizosaccharomyces pombe (strain 972 / ATCC 24843) (Fission yeast).